The following is a 129-amino-acid chain: Large ribosomal subunit protein bL19 (129 aa).

The protein belongs to the bacterial ribosomal protein bL19 family.

Functionally, this protein is located at the 30S-50S ribosomal subunit interface and may play a role in the structure and function of the aminoacyl-tRNA binding site. In Paraburkholderia phytofirmans (strain DSM 17436 / LMG 22146 / PsJN) (Burkholderia phytofirmans), this protein is Large ribosomal subunit protein bL19.